The following is a 274-amino-acid chain: Dermonecrotic toxin SdSicTox-betaIIB1bx (274 aa).

His-5 is a catalytic residue. Mg(2+) contacts are provided by Glu-25 and Asp-27. His-41 (nucleophile) is an active-site residue. 2 disulfides stabilise this stretch: Cys-45/Cys-51 and Cys-47/Cys-190. Asp-85 contacts Mg(2+).

Belongs to the arthropod phospholipase D family. Class II subfamily. It depends on Mg(2+) as a cofactor. As to expression, expressed by the venom gland.

Its subcellular location is the secreted. It carries out the reaction an N-(acyl)-sphingosylphosphocholine = an N-(acyl)-sphingosyl-1,3-cyclic phosphate + choline. It catalyses the reaction an N-(acyl)-sphingosylphosphoethanolamine = an N-(acyl)-sphingosyl-1,3-cyclic phosphate + ethanolamine. The catalysed reaction is a 1-acyl-sn-glycero-3-phosphocholine = a 1-acyl-sn-glycero-2,3-cyclic phosphate + choline. The enzyme catalyses a 1-acyl-sn-glycero-3-phosphoethanolamine = a 1-acyl-sn-glycero-2,3-cyclic phosphate + ethanolamine. Dermonecrotic toxins cleave the phosphodiester linkage between the phosphate and headgroup of certain phospholipids (sphingolipid and lysolipid substrates), forming an alcohol (often choline) and a cyclic phosphate. This toxin acts on sphingomyelin (SM). It may also act on ceramide phosphoethanolamine (CPE), lysophosphatidylcholine (LPC) and lysophosphatidylethanolamine (LPE), but not on lysophosphatidylserine (LPS), and lysophosphatidylglycerol (LPG). It acts by transphosphatidylation, releasing exclusively cyclic phosphate products as second products. Induces dermonecrosis, hemolysis, increased vascular permeability, edema, inflammatory response, and platelet aggregation. This is Dermonecrotic toxin SdSicTox-betaIIB1bx from Sicarius cf. damarensis (strain GJB-2008) (Six-eyed sand spider).